The sequence spans 332 residues: Glycerol-3-phosphate dehydrogenase [NAD(P)+] 2 (332 aa).

S17, W18, R37, and K112 together coordinate NADPH. 2 residues coordinate sn-glycerol 3-phosphate: K112 and G140. A144 is a binding site for NADPH. Sn-glycerol 3-phosphate is bound by residues K195, D243, S253, R254, and N255. The Proton acceptor role is filled by K195. Position 254 (R254) interacts with NADPH. NADPH-binding residues include V278 and E280.

It belongs to the NAD-dependent glycerol-3-phosphate dehydrogenase family.

The protein resides in the cytoplasm. The catalysed reaction is sn-glycerol 3-phosphate + NAD(+) = dihydroxyacetone phosphate + NADH + H(+). It catalyses the reaction sn-glycerol 3-phosphate + NADP(+) = dihydroxyacetone phosphate + NADPH + H(+). Its pathway is membrane lipid metabolism; glycerophospholipid metabolism. Its function is as follows. Catalyzes the reduction of the glycolytic intermediate dihydroxyacetone phosphate (DHAP) to sn-glycerol 3-phosphate (G3P), the key precursor for phospholipid synthesis. The polypeptide is Glycerol-3-phosphate dehydrogenase [NAD(P)+] 2 (Mycolicibacterium paratuberculosis (strain ATCC BAA-968 / K-10) (Mycobacterium paratuberculosis)).